A 541-amino-acid polypeptide reads, in one-letter code: Protein yellow (541 aa).

The signal sequence occupies residues 1–21; sequence MFQDKGWVLLTLITLVSPSWA. A glycan (N-linked (GlcNAc...) asparagine) is linked at N144.

It belongs to the major royal jelly protein family.

The protein localises to the secreted. In terms of biological role, controls the pigmentation pattern of the adult cuticle and larval mouth parts. The protein is Protein yellow (y) of Drosophila yakuba (Fruit fly).